The following is an 837-amino-acid chain: Protein translocase subunit SecA (837 aa).

Residues glutamine 85, 103 to 107 (GEGKT), and aspartate 493 contribute to the ATP site. Residues cysteine 821, cysteine 823, cysteine 832, and histidine 833 each coordinate Zn(2+).

Belongs to the SecA family. In terms of assembly, monomer and homodimer. Part of the essential Sec protein translocation apparatus which comprises SecA, SecYEG and auxiliary proteins SecDF. Other proteins may also be involved. It depends on Zn(2+) as a cofactor.

It is found in the cell membrane. The protein resides in the cytoplasm. The catalysed reaction is ATP + H2O + cellular proteinSide 1 = ADP + phosphate + cellular proteinSide 2.. In terms of biological role, part of the Sec protein translocase complex. Interacts with the SecYEG preprotein conducting channel. Has a central role in coupling the hydrolysis of ATP to the transfer of proteins into and across the cell membrane, serving as an ATP-driven molecular motor driving the stepwise translocation of polypeptide chains across the membrane. The protein is Protein translocase subunit SecA of Streptococcus pneumoniae (strain Taiwan19F-14).